A 119-amino-acid chain; its full sequence is Ribosome-binding factor A (119 aa).

This sequence belongs to the RbfA family. Monomer. Binds 30S ribosomal subunits, but not 50S ribosomal subunits or 70S ribosomes.

It localises to the cytoplasm. One of several proteins that assist in the late maturation steps of the functional core of the 30S ribosomal subunit. Associates with free 30S ribosomal subunits (but not with 30S subunits that are part of 70S ribosomes or polysomes). Required for efficient processing of 16S rRNA. May interact with the 5'-terminal helix region of 16S rRNA. The protein is Ribosome-binding factor A of Citrifermentans bemidjiense (strain ATCC BAA-1014 / DSM 16622 / JCM 12645 / Bem) (Geobacter bemidjiensis).